The following is a 431-amino-acid chain: Evolutionarily conserved signaling intermediate in Toll pathway, mitochondrial (431 aa).

The transit peptide at 1 to 48 (MSWVQATLLARGLCRAWGGTCGAALTGTSISQVPRRLPRGLHCSAAAH) directs the protein to the mitochondrion. Residue lysine 372 forms a Glycyl lysine isopeptide (Lys-Gly) (interchain with G-Cter in ubiquitin) linkage. The tract at residues 400–431 (LQTSSAGLEEPPLPEDHQEEDDNLQRQQQGQS) is disordered.

Belongs to the ECSIT family. As to quaternary structure, interacts with MAP3K1, SMAD4 and TRAF6. Interacts with SMAD1 only after BMP4-treatment. Part of the mitochondrial complex I assembly/MCIA complex that comprises at least the core subunits TMEM126B, NDUFAF1, ECSIT and ACAD9 and complement subunits such as COA1 and TMEM186. Interacts with NDUFAF1. Interacts with ACAD9. Interacts with TRIM59. Interacts with TMEM70 and TMEM242. Interacts (when ubiquitinated) with NF-kappa-B subunits RELA and NFKB1. Interacts with RIGI, IFIT1 and MAVS; these interactions promote RLR-mediated type I IFN induction. Interacts with SQSTM1; this interaction inhibits TLR4 signaling via functional regulation of the TRAF6-ECSIT complex. Interacts with cereblon/CRBN; this interaction inhibits the ubiquitination of ECSIT. Ubiquitinated on Lys-372; leading to translocation in the nucleus together with RELA and NFKB1 and expression of NF-kappa-B-dependent genes.

The protein localises to the cytoplasm. It localises to the nucleus. Its subcellular location is the mitochondrion. Its function is as follows. Adapter protein that plays a role in different signaling pathways including TLRs and IL-1 pathways or innate antiviral induction signaling. Plays a role in the activation of NF-kappa-B by forming a signal complex with TRAF6 and TAK1/MAP3K7 to activate TAK1/MAP3K7 leading to activation of IKKs. Once ubiquitinated, interacts with the dissociated RELA and NFKB1 proteins and translocates to the nucleus where it induces NF-kappa-B-dependent gene expression. Plays a role in innate antiviral immune response by bridging the pattern recognition receptors RIGI and MDA5/IFIT1 to the MAVS complex at the mitochondrion. Promotes proteolytic activation of MAP3K1. Involved in the BMP signaling pathway. Required for normal embryonic development. As part of the MCIA complex, involved in the assembly of the mitochondrial complex I. This is Evolutionarily conserved signaling intermediate in Toll pathway, mitochondrial from Homo sapiens (Human).